Reading from the N-terminus, the 276-residue chain is Elongation factor Ts (276 aa).

The segment at 79-82 is involved in Mg(2+) ion dislocation from EF-Tu; the sequence is TDFV.

The protein belongs to the EF-Ts family.

Its subcellular location is the cytoplasm. Associates with the EF-Tu.GDP complex and induces the exchange of GDP to GTP. It remains bound to the aminoacyl-tRNA.EF-Tu.GTP complex up to the GTP hydrolysis stage on the ribosome. This chain is Elongation factor Ts, found in Buchnera aphidicola subsp. Cinara cedri (strain Cc).